We begin with the raw amino-acid sequence, 643 residues long: MADPEGTDGEGTGCNGWFFVETIVEKKTGDVISDDEDETATDTGSDMVDFIDTQLSICEQAEQETAQALFHAQEVQNDAQVLHLLKRKFAGGSKENSPLGEQLSVDTDLSPRLQEISLNSGHKKAKRRLFTISDSGYGCSEVEAAETQVTVNTNAENGGSVHSTQSSGGDSSDNAENVDPHCSITELKELLQASNKKAAMLAVFKDIYGLSFTDLVRNFKSDKTTCTDWVMAIFGVNPTVAEGFKTLIKPATLYAHIQCLDCKWGVLILALLRYKCGKNRLTVAKGLSTLLHVPETCMLIEPPKLRSSVAALYWYRTGISNISEVSGDTPEWIQRLTIIQHGIDDSNFDLSDMVQWAFDNDLTDESDMAFQYAQLADCNSNAAAFLKSNCQAKYLKDCAVMCRHYKRAQKRQMNMSQWIKYRCSKIDEGGDWRPIVQFLRYQGVEFISFLRALKEFLKGTPKKNCILLYGPANTGKSYFGMSFIHFLQGAIISFVNSNSHFWLEPLADTKVAMLDDATHTCWTYFDNYMRNALDGNPISIDRKHKPLLQLKCPPILLTSNIDPAKDNKWPYLESRVTVFTFPHAFPFDKNGNPVYEINDKNWKCFFERTWSRLDLHEDDEDADTEGIPFGTFKCVTGQNTRPL.

The Nuclear localization signal motif lies at 86–88 (KRK). Positions 109 to 118 (LSPRLQEISL) match the Nuclear export signal motif. Ser-110 carries the phosphoserine; by host modification. Residues 152–175 (NTNAENGGSVHSTQSSGGDSSDNA) show a composition bias toward polar residues. A disordered region spans residues 152–178 (NTNAENGGSVHSTQSSGGDSSDNAENV). Positions 179-345 (DPHCSITELK…LTIIQHGIDD (167 aa)) are DNA-binding region. An SF3 helicase domain is found at 444–594 (VEFISFLRAL…FPFDKNGNPV (151 aa)). 470 to 477 (GPANTGKS) is an ATP binding site. Lys-551 participates in a covalent cross-link: Glycyl lysine isopeptide (Lys-Gly) (interchain with G-Cter in SUMO).

It belongs to the papillomaviridae E1 protein family. In terms of assembly, can form hexamers. Interacts with E2 protein; this interaction increases E1 DNA binding specificity. Interacts with host DNA polymerase subunit POLA2. Interacts with host single stranded DNA-binding protein RPA1. Interacts with host TOP1; this interaction stimulates the enzymatic activity of TOP1. Post-translationally, phosphorylated. Sumoylated.

It localises to the host nucleus. The catalysed reaction is Couples ATP hydrolysis with the unwinding of duplex DNA by translocating in the 3'-5' direction.. It catalyses the reaction ATP + H2O = ADP + phosphate + H(+). Its function is as follows. ATP-dependent DNA 3'-5' helicase required for initiation of viral DNA replication. It forms a complex with the viral E2 protein. The E1-E2 complex binds to the replication origin which contains binding sites for both proteins. During the initial step, a dimer of E1 interacts with a dimer of protein E2 leading to a complex that binds the viral origin of replication with high specificity. Then, a second dimer of E1 displaces the E2 dimer in an ATP-dependent manner to form the E1 tetramer. Following this, two E1 monomers are added to each half of the site, which results in the formation of two E1 trimers on the viral ori. Subsequently, two hexamers will be created. The double hexamer acts as a bi-directional helicase machinery and unwinds the viral DNA and then recruits the host DNA polymerase to start replication. This is Replication protein E1 from Human papillomavirus 45.